The chain runs to 126 residues: NADH-quinone oxidoreductase subunit A (126 aa).

Transmembrane regions (helical) follow at residues 14 to 34 (FLYF…TSWF), 66 to 86 (FYLI…LYAW), and 96 to 116 (IGFV…FYLV).

Belongs to the complex I subunit 3 family. NDH-1 is composed of 13 different subunits. Subunits NuoA, H, J, K, L, M, N constitute the membrane sector of the complex.

Its subcellular location is the cell membrane. It carries out the reaction a quinone + NADH + 5 H(+)(in) = a quinol + NAD(+) + 4 H(+)(out). In terms of biological role, NDH-1 shuttles electrons from NADH, via FMN and iron-sulfur (Fe-S) centers, to quinones in the respiratory chain. The immediate electron acceptor for the enzyme in this species is believed to be ubiquinone. Couples the redox reaction to proton translocation (for every two electrons transferred, four hydrogen ions are translocated across the cytoplasmic membrane), and thus conserves the redox energy in a proton gradient. This chain is NADH-quinone oxidoreductase subunit A, found in Buchnera aphidicola subsp. Schizaphis graminum (strain Sg).